We begin with the raw amino-acid sequence, 348 residues long: Olfactory receptor 2T4 (348 aa).

The Extracellular portion of the chain corresponds to Met1–Ala57. N-linked (GlcNAc...) asparagine glycosylation is found at Asn31 and Asn37. The chain crosses the membrane as a helical span at residues Leu58–Ile81. Residues His82–Thr89 lie on the Cytoplasmic side of the membrane. Residues Pro90–Pro111 traverse the membrane as a helical segment. Residues Lys112 to Gln132 lie on the Extracellular side of the membrane. The cysteines at positions 129 and 221 are disulfide-linked. A helical membrane pass occupies residues Met133 to Tyr152. Over Asp153–Arg171 the chain is Cytoplasmic. Residues Val172–Thr190 traverse the membrane as a helical segment. The Extracellular portion of the chain corresponds to Phe191–Tyr227. Asn218 is a glycosylation site (N-linked (GlcNAc...) asparagine). Residues Glu228–Leu251 form a helical membrane-spanning segment. Over Leu252–Lys268 the chain is Cytoplasmic. The chain crosses the membrane as a helical span at residues Ala269–Tyr291. The Extracellular segment spans residues Met292–Met304. A helical transmembrane segment spans residues Met305–Leu324. The Cytoplasmic segment spans residues Arg325–Glu348.

This sequence belongs to the G-protein coupled receptor 1 family.

Its subcellular location is the cell membrane. Functionally, odorant receptor. In Homo sapiens (Human), this protein is Olfactory receptor 2T4 (OR2T4).